Here is a 448-residue protein sequence, read N- to C-terminus: U1 small nuclear ribonucleoprotein 70 kDa (448 aa).

A required for interaction with U1 RNA region spans residues 91–201 (TEIKNATEDP…GGGLGGTRRG (111 aa)). Residues 102–180 (RTLFIARINY…KRVLVDVERA (79 aa)) enclose the RRM domain. The interval 188–448 (PRRLGGGLGG…SSGDPSWWRQ (261 aa)) is disordered. Positions 191 to 200 (LGGGLGGTRR) are enriched in gly residues. 2 stretches are compositionally biased toward basic and acidic residues: residues 206 to 234 (NIKH…REGP) and 262 to 272 (ERRDRERDRGR). Residues 281–293 (SRSRSRERRKRRA) show a composition bias toward basic residues. Composition is skewed to basic and acidic residues over residues 294–320 (GSRE…DRER) and 346–376 (RDRE…IKEE). Residues 405 to 425 (RPPPAHHNMFSVPPPPILGRG) form a mediates binding to Psi region. The segment covering 426 to 448 (NASTNPNPDNGQQSSGDPSWWRQ) has biased composition (polar residues).

As to quaternary structure, component of the U1 snRNP. Interacts with Psi; essential for alternative splicing of P-element transposase. Interacts with the SMN complex.

It is found in the nucleus speckle. Its subcellular location is the nucleus. It localises to the nucleoplasm. Functionally, mediates the splicing of pre-mRNA by binding to the stem loop I region of U1-snRNA. Required during oogenesis for nurse cell chromatin dispersal. In Drosophila melanogaster (Fruit fly), this protein is U1 small nuclear ribonucleoprotein 70 kDa (snRNP-U1-70K).